The primary structure comprises 336 residues: NEDD4 family-interacting protein 2 (336 aa).

Disordered regions lie at residues 1–24 and 37–156; these read MARR…RGAP and SAAA…SITV. The Cytoplasmic segment spans residues 1–231; the sequence is MARRRSQRVC…ADQLRVGNDG (231 aa). Over residues 37-48 the composition is skewed to low complexity; the sequence is SAAAAGATGSEE. A compositionally biased stretch (basic and acidic residues) spans 78–99; the sequence is EHGEDSLSRKPDPEPGRMDHHQ. The segment at 148-151 is interaction with NEDD4; sequence PPPY. Positions 148-151 match the PPxY motif 1 motif; the sequence is PPPY. Phosphotyrosine; by SRC is present on residues tyrosine 151, tyrosine 167, tyrosine 171, and tyrosine 177. 2 consecutive short sequence motifs (PPxY motif) follow at residues 174–177 and 184–186; these read PPPY and PTY. Residues 232–252 form a helical membrane-spanning segment; that stretch reads IFMLAFFMAFIFNWLGFCLSF. Residues 253-257 lie on the Extracellular side of the membrane; it reads CITNT. Residues 258 to 278 form a helical membrane-spanning segment; it reads IAGRYGAICGFGLSLIKWILI. The Cytoplasmic segment spans residues 279–287; it reads VRFSDYFTG. The helical transmembrane segment at 288-308 threads the bilayer; it reads YFNGQYWLWWIFLVLGLLLFF. The Extracellular segment spans residues 309 to 336; that stretch reads RGFVNYLKVRNMSESMAAAHRTRYFFLL.

As to quaternary structure, forms heterodimers with NDFIP1. Interacts with HECT domain-containing E3 ubiquitin-protein ligases, including NEDD4. Interacts with NEDD4L. Interacts with PTEN. When phosphorylated at Tyr-167, interacts with SRC and LYN SH2 domain. May thus act as a scaffold that recruits SRC to NDFIP1, enhancing NDFIP1 phosphorylation. Interacts with SLC11A2/DMT1. May interact with phosphorylated EGFR. Interacts with KCNH2. Post-translationally, ubiquitinated by NEDD4 and ITCH. Also ubiquitinated by NEDD4L. Ubiquitination by NEDD4 or NEDD4L does not affect turnover. Undergoes transient tyrosine-phosphorylation following EGF stimulation, most probably catalyzed by SRC. Phosphorylation on Tyr-151, Tyr-171 and Tyr-177 are dependent on the phosphorylation on Tyr-167. Also phosphorylated by LYN and FYN. In terms of tissue distribution, expressed in brain, lung, heart, skeletal muscle, kidney, liver and placenta.

Its subcellular location is the endosome membrane. The protein localises to the golgi apparatus membrane. It is found in the endosome. It localises to the multivesicular body membrane. Functionally, activates HECT domain-containing E3 ubiquitin-protein ligases, including ITCH, NEDD4, NEDD4L, SMURF2, WWP1 and WWP2, and consequently modulates the stability of their targets. As a result, may control many cellular processes. Recruits ITCH, NEDD4 and SMURF2 to endosomal membranes. Negatively regulates KCNH2 potassium channel activity by decreasing its cell-surface expression and interfering with channel maturation through recruitment of NEDD4L to the Golgi apparatus and multivesicular body where it mediates KCNH2 degradation. May modulate EGFR signaling. Together with NDFIP1, limits the cytokine signaling and expansion of effector Th2 T-cells by promoting degradation of JAK1, probably by ITCH- and NEDD4L-mediated ubiquitination. In Homo sapiens (Human), this protein is NEDD4 family-interacting protein 2 (NDFIP2).